A 464-amino-acid polypeptide reads, in one-letter code: Heterogeneous nuclear ribonucleoprotein K (464 aa).

The residue at position 1 (Met1) is an N-acetylmethionine. Positions 1 to 37 are disordered; it reads METEQPEETFPNTETNGEFGKRPAEDMEEEQAFKRSR. The segment at 1-276 is necessary for interaction with DDX1; it reads METEQPEETF…GRGGRPMPPS (276 aa). Residues 19–37 show a composition bias toward basic and acidic residues; it reads FGKRPAEDMEEEQAFKRSR. At Lys34 the chain carries N6-acetyllysine; alternate. A Glycyl lysine isopeptide (Lys-Gly) (interchain with G-Cter in SUMO1); alternate cross-link involves residue Lys34. Residue Lys34 forms a Glycyl lysine isopeptide (Lys-Gly) (interchain with G-Cter in SUMO2); alternate linkage. The residue at position 36 (Ser36) is a Phosphoserine. Thr39 is subject to Phosphothreonine. The KH 1 domain occupies 42–104; that stretch reads MVELRILLQS…ETIGEILKKI (63 aa). Residues Lys52 and Lys60 each participate in a glycyl lysine isopeptide (Lys-Gly) (interchain with G-Cter in SUMO2) cross-link. A run of 2 repeats spans residues 54–76 and 59–62. A 2 X 22 AA approximate repeats region spans residues 54–421; sequence AGAVIGKGGK…QIRHESGASI (368 aa). Residues 59-407 are 5 X 4 AA repeats of G-X-G-G; that stretch reads GKGGKNIKAL…LAGSIIGKGG (349 aa). Residues Ser75 and Ser116 each carry the phosphoserine modification. The 66-residue stretch at 144–209 folds into the KH 2 domain; sequence DCELRLLIHQ…DRVVECIKII (66 aa). A Glycyl lysine isopeptide (Lys-Gly) (interchain with G-Cter in SUMO1); alternate cross-link involves residue Lys163. Lys163 participates in a covalent cross-link: Glycyl lysine isopeptide (Lys-Gly) (interchain with G-Cter in SUMO2); alternate. Lys198 bears the N6-acetyllysine mark. 2 positions are modified to phosphoserine: Ser214 and Ser216. Residue Lys219 forms a Glycyl lysine isopeptide (Lys-Gly) (interchain with G-Cter in SUMO2); alternate linkage. At Lys219 the chain carries N6-succinyllysine; alternate. Residues 236 to 273 are RNA-binding RGG-box; it reads YGGFTMMFDDRRGRPVGFPMRGRGGFDRMPPGRGGRPM. 3 repeat units span residues 245-250, 257-260, and 267-270. The interval 245–329 is 2 X 6 AA approximate repeats; sequence DRRGRPVGFP…LMAYDRRGRP (85 aa). The tract at residues 250 to 329 is disordered; it reads PVGFPMRGRG…LMAYDRRGRP (80 aa). The segment covering 252–266 has biased composition (low complexity); that stretch reads GFPMRGRGGFDRMPP. Residues 276–285 show a composition bias toward basic and acidic residues; sequence SRRDYDDMSP. A Phosphoserine modification is found at Ser284. The 3-4 repeat unit spans residues 295–298; it reads GRGG. The residue at position 316 (Arg316) is an Omega-N-methylarginine. A 2-2 repeat occupies 324–329; the sequence is DRRGRP. Omega-N-methylarginine is present on Arg377. The residue at position 379 (Ser379) is a Phosphoserine. At Tyr380 the chain carries Phosphotyrosine. The region spanning 387 to 451 is the KH 3 domain; that stretch reads IITTQVTIPK…DQIQNAQYLL (65 aa). Repeat copies occupy residues 399–421 and 404–407. Position 405 is an N6-acetyllysine; alternate (Lys405). Residue Lys405 forms a Glycyl lysine isopeptide (Lys-Gly) (interchain with G-Cter in SUMO2); alternate linkage. At Ser420 the chain carries Phosphoserine. A Glycyl lysine isopeptide (Lys-Gly) (interchain with G-Cter in SUMO1); alternate cross-link involves residue Lys422. Lys422 is covalently cross-linked (Glycyl lysine isopeptide (Lys-Gly) (interchain with G-Cter in SUMO2); alternate). Lys422 is covalently cross-linked (Glycyl lysine isopeptide (Lys-Gly) (interchain with G-Cter in SUMO); alternate).

In terms of assembly, identified in the spliceosome C complex. Interacts with ANKRD28, RBM42 and ZIK1. Interacts with DDX1. Interacts with MDM2; this interaction leads to ubiquitination and proteasomal degradation. Interacts with p53/TP53. Interacts with BRDT. Interacts with IVNS1ABP. Interacts with PPIA/CYPA. Part of a transcription inhibitory ribonucleoprotein complex composed at least of the circular RNA circZNF827, ZNF827 and HNRNPL. Sumoylated by CBX4. Sumoylation is increased upon DNA damage, such as that produced by doxorubicin, etoposide, UV light and camptothecin, due to enhanced CBX4 phosphorylation by HIPK2 under these conditions. Post-translationally, ubiquitinated by MDM2. Doxorubicin treatment does not affect monoubiquitination, but slightly decreases HNRNPK poly-ubiquitination. In terms of processing, O-glycosylated (O-GlcNAcylated), in a cell cycle-dependent manner.

It localises to the cytoplasm. It is found in the nucleus. Its subcellular location is the nucleoplasm. The protein localises to the cell projection. The protein resides in the podosome. Its function is as follows. One of the major pre-mRNA-binding proteins. Binds tenaciously to poly(C) sequences. Likely to play a role in the nuclear metabolism of hnRNAs, particularly for pre-mRNAs that contain cytidine-rich sequences. Can also bind poly(C) single-stranded DNA. Plays an important role in p53/TP53 response to DNA damage, acting at the level of both transcription activation and repression. When sumoylated, acts as a transcriptional coactivator of p53/TP53, playing a role in p21/CDKN1A and 14-3-3 sigma/SFN induction. As far as transcription repression is concerned, acts by interacting with long intergenic RNA p21 (lincRNA-p21), a non-coding RNA induced by p53/TP53. This interaction is necessary for the induction of apoptosis, but not cell cycle arrest. As part of a ribonucleoprotein complex composed at least of ZNF827, HNRNPL and the circular RNA circZNF827 that nucleates the complex on chromatin, may negatively regulate the transcription of genes involved in neuronal differentiation. In Macaca fascicularis (Crab-eating macaque), this protein is Heterogeneous nuclear ribonucleoprotein K (HNRNPK).